A 487-amino-acid chain; its full sequence is MYIVMITPECAPIAKVGGLGDVVQGLSNELSIRGNTVELILPKYDCMRYERIWGLEKTHNNLWVPYHDQWIPCDVYFGFAEGLKCFFIEPHNGFFQRGTYYGQPDDPQRFAFFCKAALEFMLRSNKYPEIIHCHDWQTGLVPVLLFEQYKYLGMTHPRVCYTLHNMRHQGVTGGHILQQVGLDPAAYMTPERLLDHTYPHGVNLMKGGIVFSNFITTVSPRYLDEIRYTDQGYGLQHTLHEHSQKLGGILNGVDYKVWNPDIDPYIAARYNLKTLDKKYENKTALRHRLWLRDEYKPIVGVISRLDPQKGVELIRHALFYCLANGCQFVLLGASASNSINADFWYLKQYLNDDPDCHLEIGYDEDLAHQIYAGADMLIVPSIYEPCGLTQMIAMKYGTVPIVRHVGGLADTVFDANYAHKPYHERNGFVFHDFNHEGIEAALHRAIGLWYEYPQYFRELMENGMRYDFSWNHPGQHYLNIYHHIQEI.

Lys15 lines the ADP-alpha-D-glucose pocket.

This sequence belongs to the glycosyltransferase 1 family. Bacterial/plant glycogen synthase subfamily.

It catalyses the reaction [(1-&gt;4)-alpha-D-glucosyl](n) + ADP-alpha-D-glucose = [(1-&gt;4)-alpha-D-glucosyl](n+1) + ADP + H(+). It functions in the pathway glycan biosynthesis; glycogen biosynthesis. In terms of biological role, synthesizes alpha-1,4-glucan chains using ADP-glucose. This chain is Glycogen synthase 1, found in Nitrosococcus oceani (strain ATCC 19707 / BCRC 17464 / JCM 30415 / NCIMB 11848 / C-107).